The chain runs to 233 residues: DNA repair protein RecO (233 aa).

It belongs to the RecO family.

Its function is as follows. Involved in DNA repair and RecF pathway recombination. The chain is DNA repair protein RecO from Francisella philomiragia subsp. philomiragia (strain ATCC 25017 / CCUG 19701 / FSC 153 / O#319-036).